The primary structure comprises 115 residues: Double-headed protease inhibitor, submandibular gland (115 aa).

Kazal-like domains are found at residues 6 to 66 (IGRE…ACDI) and 67 to 115 (ECTE…HGEC). Cystine bridges form between Cys-12-Cys-46, Cys-24-Cys-43, Cys-32-Cys-64, Cys-68-Cys-97, Cys-75-Cys-94, and Cys-83-Cys-115.

The protein localises to the secreted. This inhibitor is composed of two homologous actively inhibiting halves: one which inhibits trypsin, the other which inhibits elastase. This is Double-headed protease inhibitor, submandibular gland from Canis lupus familiaris (Dog).